The chain runs to 628 residues: WW domain-containing adapter protein with coiled-coil (628 aa).

3 disordered regions span residues Met1–Ser130, Glu152–Pro338, and Asn417–Ser532. Basic and acidic residues predominate over residues Ser37 to Thr49. Positions Gly74–Val84 are enriched in basic residues. Low complexity predominate over residues Asn101 to Ser121. One can recognise a WW domain in the interval Tyr123–Glu156. 2 stretches are compositionally biased toward basic and acidic residues: residues Glu152 to Ser168 and Pro176 to Ala185. Over residues Asp199–Ser213 the composition is skewed to polar residues. Positions Arg214–Ser227 are enriched in basic and acidic residues. Low complexity-rich tracts occupy residues Ser230 to Pro260 and Ser299 to Val331. The span at Pro420–Val446 shows a compositional bias: polar residues. Over residues Gly467–Lys486 the composition is skewed to low complexity. The segment covering Pro511 to Ser532 has biased composition (polar residues). Residues Gln599–Ser625 are a coiled coil.

It is found in the nucleus. Functionally, acts as a linker between gene transcription and histone H2B monoubiquitination at 'Lys-120' (H2BK120ub1). Positive regulator of amino acid starvation-induced autophagy. Positively regulates MTOR activity. May negatively regulate the ubiquitin proteasome pathway. This is WW domain-containing adapter protein with coiled-coil (wac) from Xenopus tropicalis (Western clawed frog).